The chain runs to 199 residues: Holliday junction branch migration complex subunit RuvA (199 aa).

The interval 1–65 (MIASLRGKLL…DRGQRLFGFG (65 aa)) is domain I. Residues 66–144 (SKKDRESFEL…KFEMFLNEGT (79 aa)) are domain II. Residues 145–155 (TESSFVDRETD) form a flexible linker region. Residues 155-199 (DLATLALIQLGFDEKSATKQVADAKKLNPGLSASDIVKQVITGTR) form a domain III region.

Belongs to the RuvA family. In terms of assembly, homotetramer. Forms an RuvA(8)-RuvB(12)-Holliday junction (HJ) complex. HJ DNA is sandwiched between 2 RuvA tetramers; dsDNA enters through RuvA and exits via RuvB. An RuvB hexamer assembles on each DNA strand where it exits the tetramer. Each RuvB hexamer is contacted by two RuvA subunits (via domain III) on 2 adjacent RuvB subunits; this complex drives branch migration. In the full resolvosome a probable DNA-RuvA(4)-RuvB(12)-RuvC(2) complex forms which resolves the HJ.

It is found in the cytoplasm. The RuvA-RuvB-RuvC complex processes Holliday junction (HJ) DNA during genetic recombination and DNA repair, while the RuvA-RuvB complex plays an important role in the rescue of blocked DNA replication forks via replication fork reversal (RFR). RuvA specifically binds to HJ cruciform DNA, conferring on it an open structure. The RuvB hexamer acts as an ATP-dependent pump, pulling dsDNA into and through the RuvAB complex. HJ branch migration allows RuvC to scan DNA until it finds its consensus sequence, where it cleaves and resolves the cruciform DNA. This chain is Holliday junction branch migration complex subunit RuvA, found in Leptospira biflexa serovar Patoc (strain Patoc 1 / Ames).